A 127-amino-acid chain; its full sequence is MSWQAYVDTSLLGTGKIDRAAIVSRAGDSVWAASAGFNLSPQEIQGLAAGFQDPPSMFGTGIILAGQKYITIRAEGRSIYGKLQKEGIICVATKLCILVSHYPETTLPGEAAKITEALADYLVGVGY.

It belongs to the profilin family. As to quaternary structure, occurs in many kinds of cells as a complex with monomeric actin in a 1:1 ratio.

The protein resides in the cytoplasm. The protein localises to the cytoskeleton. Functionally, binds to actin and affects the structure of the cytoskeleton. At high concentrations, profilin prevents the polymerization of actin, whereas it enhances it at low concentrations. By binding to PIP2, it inhibits the formation of IP3 and DG. In S.pombe, it is essential for cytokinesis. This Schizosaccharomyces pombe (strain 972 / ATCC 24843) (Fission yeast) protein is Profilin (cdc3).